The primary structure comprises 736 residues: Catalase-peroxidase (736 aa).

Residues 1–10 (MDAKTDDKGA) are compositionally biased toward basic and acidic residues. The disordered stretch occupies residues 1–26 (MDAKTDDKGAGKCPFSGGSHGHRNRD). The segment at residues 96–218 (WHSAGTYRIT…LGAVQMGLIY (123 aa)) is a cross-link (tryptophyl-tyrosyl-methioninium (Trp-Tyr) (with M-244)). His97 functions as the Proton acceptor in the catalytic mechanism. The tryptophyl-tyrosyl-methioninium (Tyr-Met) (with W-96) cross-link spans 218-244 (YVNPEGPNGNPDPVAAAKDIRETFARM). A heme b-binding site is contributed by His259.

It belongs to the peroxidase family. Peroxidase/catalase subfamily. In terms of assembly, homodimer or homotetramer. Requires heme b as cofactor. Post-translationally, formation of the three residue Trp-Tyr-Met cross-link is important for the catalase, but not the peroxidase activity of the enzyme.

It catalyses the reaction H2O2 + AH2 = A + 2 H2O. It carries out the reaction 2 H2O2 = O2 + 2 H2O. Bifunctional enzyme with both catalase and broad-spectrum peroxidase activity. This is Catalase-peroxidase from Rhodopseudomonas palustris (strain ATCC BAA-98 / CGA009).